A 431-amino-acid polypeptide reads, in one-letter code: Adenylosuccinate synthetase (431 aa).

Residues 13-19 and 41-43 contribute to the GTP site; these read GDEGKGK and GHT. Aspartate 14 acts as the Proton acceptor in catalysis. Positions 14 and 41 each coordinate Mg(2+). Residues 14–17, 39–42, threonine 130, arginine 144, glutamine 225, threonine 240, and arginine 304 contribute to the IMP site; these read DEGK and NAGH. Histidine 42 acts as the Proton donor in catalysis. 300–306 contributes to the substrate binding site; it reads SVTGRPR. GTP contacts are provided by residues arginine 306, 332–334, and 414–416; these read KLD and STG.

It belongs to the adenylosuccinate synthetase family. In terms of assembly, homodimer. Mg(2+) serves as cofactor.

The protein localises to the cytoplasm. It carries out the reaction IMP + L-aspartate + GTP = N(6)-(1,2-dicarboxyethyl)-AMP + GDP + phosphate + 2 H(+). It functions in the pathway purine metabolism; AMP biosynthesis via de novo pathway; AMP from IMP: step 1/2. Its function is as follows. Plays an important role in the de novo pathway of purine nucleotide biosynthesis. Catalyzes the first committed step in the biosynthesis of AMP from IMP. This Bordetella petrii (strain ATCC BAA-461 / DSM 12804 / CCUG 43448) protein is Adenylosuccinate synthetase.